Consider the following 761-residue polypeptide: Ribonucleoside-diphosphate reductase subunit alpha (761 aa).

An ATP-cone domain is found at 5-95 (LFVTKRNGKI…IFHLRKKAFG (91 aa)). ATP contacts are provided by residues K9, 15-21 (ELINLDK), T55, and K91. GDP is bound at residue T209. A disulfide bond links C225 and C462. Residues 232–234 (DNL), R262, and R269 each bind dTTP. N437 is a binding site for GDP. The active-site Proton acceptor is the N437. C439 (cysteine radical intermediate) is an active-site residue. Residues E441 and 623 to 625 (ETS) each bind GDP. Residue E441 is the Proton acceptor of the active site.

Belongs to the ribonucleoside diphosphate reductase large chain family. In terms of assembly, tetramer of two alpha and two beta subunits.

It catalyses the reaction a 2'-deoxyribonucleoside 5'-diphosphate + [thioredoxin]-disulfide + H2O = a ribonucleoside 5'-diphosphate + [thioredoxin]-dithiol. Under complex allosteric control mediated by deoxynucleoside triphosphates and ATP binding to separate specificity and activation sites on the alpha subunit. The type of nucleotide bound at the specificity site determines substrate preference. It seems probable that ATP makes the enzyme reduce CDP and UDP, dGTP favors ADP reduction and dTTP favors GDP reduction. Stimulated by ATP and inhibited by dATP binding to the activity site. Functionally, provides the precursors necessary for DNA synthesis. Catalyzes the biosynthesis of deoxyribonucleotides from the corresponding ribonucleotides. The chain is Ribonucleoside-diphosphate reductase subunit alpha (nrdA) from Buchnera aphidicola subsp. Baizongia pistaciae (strain Bp).